The sequence spans 432 residues: Glutamate-1-semialdehyde 2,1-aminomutase (432 aa).

Lysine 272 carries the N6-(pyridoxal phosphate)lysine modification.

This sequence belongs to the class-III pyridoxal-phosphate-dependent aminotransferase family. HemL subfamily. As to quaternary structure, homodimer. The cofactor is pyridoxal 5'-phosphate.

It is found in the cytoplasm. The catalysed reaction is (S)-4-amino-5-oxopentanoate = 5-aminolevulinate. It participates in porphyrin-containing compound metabolism; protoporphyrin-IX biosynthesis; 5-aminolevulinate from L-glutamyl-tRNA(Glu): step 2/2. Its pathway is porphyrin-containing compound metabolism; chlorophyll biosynthesis. The protein is Glutamate-1-semialdehyde 2,1-aminomutase of Nostoc sp. (strain PCC 7120 / SAG 25.82 / UTEX 2576).